A 433-amino-acid polypeptide reads, in one-letter code: Glutamate-1-semialdehyde 2,1-aminomutase (433 aa).

N6-(pyridoxal phosphate)lysine is present on Lys271.

The protein belongs to the class-III pyridoxal-phosphate-dependent aminotransferase family. HemL subfamily. As to quaternary structure, homodimer. Pyridoxal 5'-phosphate is required as a cofactor.

The protein localises to the cytoplasm. It carries out the reaction (S)-4-amino-5-oxopentanoate = 5-aminolevulinate. The protein operates within porphyrin-containing compound metabolism; protoporphyrin-IX biosynthesis; 5-aminolevulinate from L-glutamyl-tRNA(Glu): step 2/2. Its pathway is porphyrin-containing compound metabolism; chlorophyll biosynthesis. This chain is Glutamate-1-semialdehyde 2,1-aminomutase, found in Prochlorococcus marinus (strain SARG / CCMP1375 / SS120).